The primary structure comprises 88 residues: Small ribosomal subunit protein uS17 (88 aa).

The protein belongs to the universal ribosomal protein uS17 family. In terms of assembly, part of the 30S ribosomal subunit.

Its function is as follows. One of the primary rRNA binding proteins, it binds specifically to the 5'-end of 16S ribosomal RNA. The sequence is that of Small ribosomal subunit protein uS17 from Pseudomonas savastanoi pv. phaseolicola (strain 1448A / Race 6) (Pseudomonas syringae pv. phaseolicola (strain 1448A / Race 6)).